The chain runs to 566 residues: Serine/threonine-protein kinase haspin homolog (566 aa).

The Protein kinase domain maps to Leu-248–Asn-566. ATP is bound by residues Ile-254–Val-262, Lys-282, Lys-377–Asp-382, Asp-418–Asn-423, and Asp-456–Thr-458. The Proton acceptor role is filled by Asp-418.

This sequence belongs to the protein kinase superfamily. Ser/Thr protein kinase family. Haspin subfamily. As to quaternary structure, interacts with pds5 and vtd. Requires Mg(2+) as cofactor.

Its subcellular location is the nucleus lamina. The protein resides in the chromosome. It localises to the cytoplasm. It is found in the cytoskeleton. The protein localises to the spindle. The catalysed reaction is L-seryl-[protein] + ATP = O-phospho-L-seryl-[protein] + ADP + H(+). It catalyses the reaction L-threonyl-[protein] + ATP = O-phospho-L-threonyl-[protein] + ADP + H(+). In terms of biological role, serine/threonine-protein kinase that phosphorylates histone H3 at 'Thr-4' (H3T3ph) during mitosis and interphase. Function is essential for chromosome organization during mitosis and genome organization in interphase cells, thus playing a functional role in gene regulation. During mitosis, may act through H3T3ph to both position and modulate activation of AURKB and other components of the chromosomal passenger complex (CPC) at centromeres to ensure proper chromatid cohesion, metaphase alignment and normal progression through the cell cycle. During interphase, associates with the cohesion complex and mediates pds5 binding to chromatin to ensure correct sister chromatid cohesion, chromatin organization, and also functions with Pds5-cohesin to modify Polycomb-dependent homeotic transformations. Function during interphase is required for insulator activity, nuclear compaction, heterochromatin-induced position-effect variegation and PcG-mediated pairing-sensitive silencing. This chain is Serine/threonine-protein kinase haspin homolog, found in Drosophila melanogaster (Fruit fly).